We begin with the raw amino-acid sequence, 205 residues long: Beta-crystallin B2 (205 aa).

Ala-2 is modified (N-acetylalanine). Residues 2-16 form an N-terminal arm region; the sequence is ASDHQTQAGKPQPLN. 2 consecutive Beta/gamma crystallin 'Greek key' domains span residues 17–56 and 57–101; these read PKII…LVQA and GPWV…RPIK. The interval 102–106 is connecting peptide; the sequence is VDSQE. Beta/gamma crystallin 'Greek key' domains lie at 107 to 148 and 149 to 191; these read HKII…RVQS and GTWV…RRIR. The interval 193–205 is C-terminal arm; it reads MQWHQRGAFHPSN.

This sequence belongs to the beta/gamma-crystallin family. As to quaternary structure, homo/heterodimer, or complexes of higher-order. The structure of beta-crystallin oligomers seems to be stabilized through interactions between the N-terminal arms.

Functionally, crystallins are the dominant structural components of the vertebrate eye lens. The chain is Beta-crystallin B2 (CRYBB2) from Canis lupus familiaris (Dog).